Consider the following 1075-residue polypeptide: Protein EXPORTIN 1A (1075 aa).

The Importin N-terminal domain maps to 37–103 (ADQILRDLQA…KNYISEVIVQ (67 aa)). 12 HEAT repeats span residues 91–130 (DGMK…QIVK), 135–171 (AKWT…EVFD), 232–267 (IFES…LNFG), 336–373 (SLLL…ELFD), 388–425 (MGLQ…LMIN), 474–513 (DTEK…SMAE), 563–600 (KFLK…KCKR), 612–649 (PFVS…AESD), 682–719 (LKDQ…IFLD), 756–793 (RETL…DYAR), 798–835 (ARES…CTLE), and 894–934 (ETGL…VLTD).

It belongs to the exportin family. In terms of assembly, interacts with RAN1. As to expression, expressed ubiquitously, with higher levels in stems, inflorescences and roots. Present in mature pollen grains, unpollinated pistils, and 2-week-old seedlings.

The protein resides in the nucleus. The protein localises to the nuclear pore complex. It is found in the nucleus membrane. In terms of biological role, receptor for the leucine-rich nuclear export signal (NES). Binds cooperatively to the NES on its target protein and to the small GTPase Ran in its active GTP-bound form. Required for the maternal-to-embryonic transition and during gametophyte development. Involved in heat-induced oxidative stress basal resistance. In Arabidopsis thaliana (Mouse-ear cress), this protein is Protein EXPORTIN 1A.